The sequence spans 2389 residues: Highly reducing polyketide synthase Dhc3 (2389 aa).

A Ketosynthase family 3 (KS3) domain is found at Asp-9–Ser-433. Residues Cys-181, His-316, and His-356 each act as for beta-ketoacyl synthase activity in the active site. A malonyl-CoA:ACP transacylase (MAT) domain region spans residues Phe-551–Asn-861. Ser-641 (for malonyltransferase activity) is an active-site residue. Residues Arg-944–Thr-1079 form an N-terminal hotdog fold region. Residues Arg-944 to Ala-1263 enclose the PKS/mFAS DH domain. A dehydratase (DH) domain region spans residues Leu-946 to Glu-1262. The Proton acceptor; for dehydratase activity role is filled by His-976. Residues Pro-1107–Ala-1263 form a C-terminal hotdog fold region. The Proton donor; for dehydratase activity role is filled by Asp-1173. Residues Gly-1673–Leu-1987 form an enoylreductase (ER) domain region. Residues Ala-2011–Asp-2191 are catalytic ketoreductase (KRc) domain. One can recognise a Carrier domain in the interval Glu-2302–Ser-2379. An O-(pantetheine 4'-phosphoryl)serine modification is found at Ser-2339.

The protein operates within mycotoxin biosynthesis. Functionally, highly reducing polyketide synthase; part of the gene cluster that mediates the biosynthesis of 10,11-dehydrocurvularin, a prevalent fungal phytotoxin with heat shock response and immune-modulatory activities. The highly reducing polyketide synthase Dhc3 is responsible for biosynthesis up to the tetraketide stage. The non-reducing polyketide synthase Dhc5 then conducts four additional chain extension cycles, producing the unreduced part of the nascent octaketide from C-1 to C-8 in 10,11-dehydrocurvularin. The polypeptide is Highly reducing polyketide synthase Dhc3 (Dhc3) (Alternaria cinerariae).